The primary structure comprises 716 residues: Calpain-1 catalytic subunit (716 aa).

The Calpain catalytic domain occupies 55–354 (LFRDEAFPPV…FTRLEICNLT (300 aa)). Ca(2+) is bound by residues Gln-109 and Asp-114. Residues Cys-115, His-272, and Asn-296 contribute to the active site. Ca(2+) is bound by residues Asp-318 and Glu-323. Thr-354 bears the Phosphothreonine mark. The domain III stretch occupies residues 355–528 (PDALKSQRFR…KSAGTQELDD (174 aa)). Residues 529 to 544 (QVQANLPDEQVLSEEE) are linker. 4 EF-hand domains span residues 543 to 578 (EEIDENFKSLFRQLAGEDMEISVKELRTILNRIISK), 587 to 620 (FSLESCRSMVNLMDRDGNGKLGLVEFNILWNRIR), 617 to 652 (NRIRNYLSIFRKFDLDKSGSMSAYEMRMAIEFAGFK), and 682 to 716 (VRLETMFRFFKTLDTDLDGVVTFDLFKWLQLTMFA). A domain IV region spans residues 545–715 (IDENFKSLFR…LFKWLQLTMF (171 aa)). Asp-600, Asp-602, Asn-604, Lys-606, Glu-611, Asp-630, Asp-632, Ser-634, Ser-636, and Glu-641 together coordinate Ca(2+).

The protein belongs to the peptidase C2 family. In terms of assembly, forms a heterodimer with a small (regulatory) subunit CAPNS1. Ca(2+) serves as cofactor. Post-translationally, undergoes calcium-induced successive autoproteolytic cleavages that generate a membrane-bound 78 kDa active form and an intracellular 75 kDa active form. Calpastatin reduces with high efficiency the transition from 78 kDa to 75 kDa calpain forms.

Its subcellular location is the cytoplasm. It localises to the cell membrane. It catalyses the reaction Broad endopeptidase specificity.. With respect to regulation, activated by micromolar concentrations of calcium and inhibited by calpastatin. Calcium-regulated non-lysosomal thiol-protease which catalyzes limited proteolysis of substrates involved in cytoskeletal remodeling and signal transduction. Proteolytically cleaves CTBP1. Cleaves and activates caspase-7 (CASP7). This is Calpain-1 catalytic subunit from Bos taurus (Bovine).